Here is a 2871-residue protein sequence, read N- to C-terminus: Fibrillin-1 (2871 aa).

Residues 1-24 (MRRGRLLEIALGFTVLLASYTSHG) form the signal peptide. Residues 25-44 (ADANLEAGNVKETRASRAKR) constitute a propeptide that is removed on maturation. The interval 45 to 81 (RGGGGHDALKGPNVCGSRYNAYCCPGWKTLPGGNQCI) is fibrillin unique N-terminal (FUN) domain. Residues 45 to 450 (RGGGGHDALK…PPRVLPVNVT (406 aa)) are N-terminal domain. Disulfide bonds link Cys-59/Cys-68, Cys-67/Cys-80, Cys-85/Cys-94, Cys-89/Cys-100, Cys-102/Cys-111, Cys-119/Cys-129, Cys-123/Cys-134, Cys-136/Cys-145, Cys-150/Cys-160, Cys-154/Cys-166, and Cys-168/Cys-177. EGF-like domains lie at 81–112 (IVPICRHSCGDGFCSRPNMCTCPSGQIAPSCG), 115–146 (SIQHCNIRCMNGGSCSDDHCLCQKGYIGTHCG), and 147–178 (QPVCESGCLNGGRCVAPNRCACTYGFTGPQCE). The interaction with MFAP4 stretch occupies residues 119–329 (CNIRCMNGGS…YTSPDGTRCI (211 aa)). The region spanning 184–236 (GPCFTVISNQMCQGQLSGIVCTKTLCCATVGRAWGHPCEMCPAQPHPCRRGFI) is the TB 1 domain. The segment at 195–221 (CQGQLSGIVCTKTLCCATVGRAWGHPC) is hybrid domain 1. In terms of domain architecture, EGF-like 4; calcium-binding spans 246–287 (DVDECQAIPGLCQGGNCINTVGSFECKCPAGHKLNEVSQKCE). Cystine bridges form between Cys-250/Cys-262, Cys-257/Cys-271, Cys-273/Cys-286, Cys-292/Cys-304, Cys-299/Cys-313, and Cys-315/Cys-328. Ser-268 is a glycosylation site (O-linked (Glc) serine). An EGF-like 5; calcium-binding domain is found at 288–329 (DIDECSTIPGICEGGECTNTVSSYFCKCPPGFYTSPDGTRCI). Residues 334-389 (GYCYTALTNGRCSNQLPQSITKMQCCCDAGRCWSPGVTVAPEMCPIRATEDFNKLC) enclose the TB 2 domain. Asn-448 carries N-linked (GlcNAc...) asparagine glycosylation. The region spanning 449–489 (VTDYCQLVRYLCQNGRCIPTPGSYRCECNKGFQLDLRGECI) is the EGF-like 6 domain. Cystine bridges form between Cys-453–Cys-465, Cys-460–Cys-474, Cys-476–Cys-488, Cys-494–Cys-504, Cys-499–Cys-513, Cys-515–Cys-528, Cys-534–Cys-546, Cys-541–Cys-555, Cys-557–Cys-570, Cys-576–Cys-587, Cys-582–Cys-596, Cys-598–Cys-611, Cys-617–Cys-628, Cys-623–Cys-637, and Cys-639–Cys-652. An O-linked (Glc) serine glycan is attached at Ser-471. In terms of domain architecture, EGF-like 7; calcium-binding spans 490–529 (DVDECEKNPCAGGECINNQGSYTCQCRAGYQSTLTRTECR). An O-linked (Glc) serine glycan is attached at Ser-510. One can recognise an EGF-like 8; calcium-binding domain in the interval 530–571 (DIDECLQNGRICNNGRCINTDGSFHCVCNAGFHVTRDGKNCE). Ser-552 carries O-linked (Glc) serine glycosylation. In terms of domain architecture, EGF-like 9; calcium-binding spans 572–612 (DMDECSIRNMCLNGMCINEDGSFKCICKPGFQLASDGRYCK). An O-linked (Glc) serine glycan is attached at Ser-593. Positions 613 to 653 (DINECETPGICMNGRCVNTDGSYRCECFPGLAVGLDGRVCV) constitute an EGF-like 10; calcium-binding domain. An O-linked (Glc) serine glycan is attached at Ser-634. The TB 3 domain maps to 659-711 (STCYGGYKRGQCIKPLFGAVTKSECCCASTEYAFGEPCQPCPAQNSAEYQALC). An EGF-like 11; calcium-binding domain is found at 723–764 (DINECALDPDICPNGICENLRGTYKCICNSGYEVDSTGKNCV). Cystine bridges form between Cys-727–Cys-739, Cys-734–Cys-748, Cys-750–Cys-763, Cys-769–Cys-781, Cys-776–Cys-790, Cys-792–Cys-805, Cys-811–Cys-821, Cys-816–Cys-830, Cys-832–Cys-845, Cys-853–Cys-875, Cys-862–Cys-887, Cys-876–Cys-890, Cys-896–Cys-908, Cys-914–Cys-926, Cys-921–Cys-935, and Cys-937–Cys-950. An EGF-like 12; calcium-binding domain is found at 765–806 (DINECVLNSLLCDNGQCRNTPGSFVCTCPKGFIYKPDLKTCE). A glycan (O-linked (Glc) serine) is linked at Ser-787. The 40-residue stretch at 807-846 (DIDECESSPCINGVCKNSPGSFICECSSESTLDPTKTICI) folds into the EGF-like 13; calcium-binding domain. O-linked (Glc) serine glycosylation occurs at Ser-827. The TB 4 domain maps to 851–902 (GTCWQTVIDGRCEININGATLKSQCCSSLGAAWGSPCTLCQVDPICGKGYSR). The tract at residues 862–887 (CEININGATLKSQCCSSLGAAWGSPC) is hybrid domain 2. One can recognise an EGF-like 14; calcium-binding domain in the interval 910 to 951 (DIDECEVFPGVCKNGLCVNTRGSFKCQCPSGMTLDATGRICL). The 53-residue stretch at 956–1008 (ETCFLRYEDEECTLPIAGRHRMDACCCSVGAAWGTEECEECPMRNTPEYEELC) folds into the TB 5 domain. The region spanning 1028 to 1069 (DINECKMIPSLCTHGKCRNTIGSFKCRCDSGFALDSEERNCT) is the EGF-like 15; calcium-binding domain. Cystine bridges form between Cys-1032–Cys-1044, Cys-1039–Cys-1053, Cys-1055–Cys-1068, Cys-1074–Cys-1086, Cys-1081–Cys-1095, Cys-1097–Cys-1111, Cys-1117–Cys-1129, Cys-1124–Cys-1138, Cys-1140–Cys-1153, Cys-1159–Cys-1171, Cys-1166–Cys-1180, Cys-1182–Cys-1195, Cys-1201–Cys-1212, Cys-1208–Cys-1221, Cys-1223–Cys-1236, Cys-1242–Cys-1254, Cys-1249–Cys-1263, Cys-1265–Cys-1278, Cys-1284–Cys-1296, Cys-1291–Cys-1305, Cys-1307–Cys-1320, Cys-1326–Cys-1339, Cys-1333–Cys-1348, Cys-1350–Cys-1361, Cys-1367–Cys-1380, Cys-1374–Cys-1389, Cys-1391–Cys-1402, Cys-1408–Cys-1420, Cys-1415–Cys-1429, Cys-1431–Cys-1444, Cys-1450–Cys-1461, Cys-1456–Cys-1470, Cys-1472–Cys-1485, Cys-1491–Cys-1502, Cys-1497–Cys-1511, Cys-1513–Cys-1526, Cys-1534–Cys-1562, Cys-1549–Cys-1574, Cys-1563–Cys-1577, Cys-1564–Cys-1589, Cys-1610–Cys-1622, Cys-1617–Cys-1631, Cys-1633–Cys-1646, Cys-1652–Cys-1663, Cys-1658–Cys-1672, and Cys-1674–Cys-1687. Ser-1050 is a glycosylation site (O-linked (Glc) serine). Asn-1067 is a glycosylation site (N-linked (GlcNAc...) asparagine). The EGF-like 16; calcium-binding domain maps to 1070–1112 (DIDECRISPDLCGRGQCVNTPGDFECKCDEGYESGFMMMKNCM). The 42-residue stretch at 1113 to 1154 (DIDECQRDPLLCRGGVCHNTEGSYRCECPPGHQLSPNISACI) folds into the EGF-like 17; calcium-binding domain. Residue Ser-1135 is glycosylated (O-linked (Glc) serine). N-linked (GlcNAc...) asparagine glycosylation occurs at Asn-1149. One can recognise an EGF-like 18; calcium-binding domain in the interval 1155 to 1196 (DINECELSAHLCPNGRCVNLIGKYQCACNPGYHSTPDRLFCV). Residues 1197 to 1237 (DIDECSIMNGGCETFCTNSEGSYECSCQPGFALMPDQRSCT) enclose the EGF-like 19; calcium-binding domain. A glycan (O-linked (Glc) serine) is linked at Ser-1218. The EGF-like 20; calcium-binding domain occupies 1238-1279 (DIDECEDNPNICDGGQCTNIPGEYRCLCYDGFMASEDMKTCV). The 42-residue stretch at 1280–1321 (DVNECDLNPNICLSGTCENTKGSFICHCDMGYSGKKGKTGCT) folds into the EGF-like 21; calcium-binding domain. An O-linked (Glc) serine glycan is attached at Ser-1302. In terms of domain architecture, EGF-like 22; calcium-binding spans 1322–1362 (DINECEIGAHNCGKHAVCTNTAGSFKCSCSPGWIGDGIKCT). O-linked (Glc) serine glycosylation occurs at Ser-1345. Residues 1363 to 1403 (DLDECSNGTHMCSQHADCKNTMGSYRCLCKEGYTGDGFTCT) form the EGF-like 23; calcium-binding domain. An N-linked (GlcNAc...) asparagine glycan is attached at Asn-1369. A glycan (O-linked (Glc) serine) is linked at Ser-1386. Residues 1404-1445 (DLDECSENLNLCGNGQCLNAPGGYRCECDMGFVPSADGKACE) form the EGF-like 24; calcium-binding domain. The region spanning 1446–1486 (DIDECSLPNICVFGTCHNLPGLFRCECEIGYELDRSGGNCT) is the EGF-like 25; calcium-binding domain. Asn-1484 carries N-linked (GlcNAc...) asparagine glycosylation. The EGF-like 26; calcium-binding domain occupies 1487–1527 (DVNECLDPTTCISGNCVNTPGSYICDCPPDFELNPTRVGCV). O-linked (Glc) serine glycosylation occurs at Ser-1508. A C-terminal domain region spans residues 1528–2731 (DTRSGNCYLD…GYPKRGRKRR (1204 aa)). The region spanning 1532-1589 (GNCYLDIRPRGDNGDTACSNEIGVGVSKASCCCSLGKAWGTPCEMCPAVNTSEYKILC) is the TB 6 domain. A Cell attachment site motif is present at residues 1541–1543 (RGD). Residue Asn-1581 is glycosylated (N-linked (GlcNAc...) asparagine). Residues 1606-1647 (DIDECQELPGLCQGGKCINTFGSFQCRCPTGYYLNEDTRVCD) form the EGF-like 27; calcium-binding domain. Residue Ser-1628 is glycosylated (O-linked (Glc) serine). The EGF-like 28; calcium-binding domain maps to 1648–1688 (DVNECETPGICGPGTCYNTVGNYTCICPPDYMQVNGGNNCM). Asn-1669 carries N-linked (GlcNAc...) asparagine glycosylation. A TB 7 domain is found at 1693–1748 (SLCYRNYYADNQTCDGELLFNMTKKMCCCSYNIGRAWNKPCEQCPIPSTDEFATLC). N-linked (GlcNAc...) asparagine glycosylation is found at Asn-1703 and Asn-1713. In terms of domain architecture, EGF-like 29; calcium-binding spans 1766-1807 (DIDECREIPGVCENGVCINMVGSFRCECPVGFFYNDKLLVCE). 40 disulfides stabilise this stretch: Cys-1770–Cys-1782, Cys-1777–Cys-1791, Cys-1793–Cys-1806, Cys-1812–Cys-1824, Cys-1818–Cys-1833, Cys-1835–Cys-1847, Cys-1853–Cys-1865, Cys-1860–Cys-1874, Cys-1876–Cys-1889, Cys-1895–Cys-1905, Cys-1900–Cys-1914, Cys-1916–Cys-1928, Cys-1934–Cys-1947, Cys-1942–Cys-1956, Cys-1958–Cys-1971, Cys-1977–Cys-1989, Cys-1984–Cys-1998, Cys-2000–Cys-2011, Cys-2017–Cys-2029, Cys-2024–Cys-2038, Cys-2040–Cys-2053, Cys-2061–Cys-2083, Cys-2070–Cys-2096, Cys-2084–Cys-2099, Cys-2085–Cys-2111, Cys-2131–Cys-2142, Cys-2137–Cys-2151, Cys-2153–Cys-2164, Cys-2170–Cys-2181, Cys-2176–Cys-2190, Cys-2192–Cys-2204, Cys-2210–Cys-2221, Cys-2217–Cys-2230, Cys-2232–Cys-2245, Cys-2251–Cys-2265, Cys-2258–Cys-2274, Cys-2276–Cys-2289, Cys-2295–Cys-2307, Cys-2302–Cys-2316, and Cys-2318–Cys-2331. Residues 1808–1848 (DIDECQNGPVCQRNAECINTAGSYRCDCKPGYRFTSTGQCN) form the EGF-like 30; calcium-binding domain. Ser-1830 carries O-linked (Glc) serine glycosylation. The EGF-like 31; calcium-binding domain maps to 1849–1890 (DRNECQEIPNICSHGQCIDTVGSFYCLCHTGFKTNDDQTMCL). An O-linked (Glc) serine glycan is attached at Ser-1871. Residues 1891–1929 (DINECERDACGNGTCRNTIGSFNCRCNHGFILSHNNDCI) enclose the EGF-like 32; calcium-binding domain. The N-linked (GlcNAc...) asparagine glycan is linked to Asn-1902. An O-linked (Glc) serine glycan is attached at Ser-1911. Positions 1930 to 1972 (DVDECASGNGNLCRNGQCINTVGSFQCQCNEGYEVAPDGRTCV) constitute an EGF-like 33; calcium-binding domain. Ser-1953 is a glycosylation site (O-linked (Glc) serine). Residues 1973 to 2012 (DINECLLEPRKCAPGTCQNLDGSYRCICPPGYSLQNEKCE) enclose the EGF-like 34; calcium-binding domain. The 42-residue stretch at 2013–2054 (DIDECVEEPEICALGTCSNTEGSFKCLCPEGFSLSSSGRRCQ) folds into the EGF-like 35; calcium-binding domain. O-linked (Glc) serine glycosylation is present at Ser-2035. The TB 8 domain maps to 2059-2111 (SYCYAKFEGGKCSSPKSRNHSKQECCCALKGEGWGDPCELCPTEPDEAFRQIC). The N-linked (GlcNAc...) asparagine glycan is linked to Asn-2077. In terms of domain architecture, EGF-like 36; calcium-binding spans 2127 to 2165 (DMDECKEPDVCKHGQCINTDGSYRCECPFGYILAGNECV). Ser-2148 carries O-linked (Glc) serine glycosylation. The EGF-like 37; calcium-binding domain occupies 2166 to 2205 (DTDECSVGNPCGNGTCKNVIGGFECTCEEGFEPGPMMTCE). The N-linked (GlcNAc...) asparagine glycan is linked to Asn-2178. The EGF-like 38; calcium-binding domain maps to 2206-2246 (DINECAQNPLLCAFRCVNTYGSYECKCPVGYVLREDRRMCK). An O-linked (Glc) serine glycan is attached at Ser-2227. An EGF-like 39; calcium-binding domain is found at 2247-2290 (DEDECEEGKHDCTEKQMECKNLIGTYMCICGPGYQRRPDGEGCV). One can recognise an EGF-like 40; calcium-binding domain in the interval 2291-2332 (DENECQTKPGICENGRCLNTRGSYTCECNDGFTASPNQDECL). Ser-2313 carries an O-linked (Glc) serine glycan. The 54-residue stretch at 2337–2390 (GYCFTEVLQNMCQIGSSNRNPVTKSECCCDGGRGWGPHCEICPFQGTVAFKKLC) folds into the TB 9 domain. In terms of domain architecture, EGF-like 41; calcium-binding spans 2402–2443 (DIDECKVIHDVCRNGECVNDRGSYHCICKTGYTPDITGTSCV). Disulfide bonds link Cys-2406-Cys-2418, Cys-2413-Cys-2427, Cys-2429-Cys-2442, Cys-2448-Cys-2459, Cys-2455-Cys-2468, Cys-2470-Cys-2483, Cys-2489-Cys-2500, Cys-2496-Cys-2509, Cys-2511-Cys-2522, Cys-2528-Cys-2541, Cys-2535-Cys-2550, Cys-2552-Cys-2565, Cys-2571-Cys-2581, Cys-2577-Cys-2590, Cys-2592-Cys-2605, Cys-2611-Cys-2622, Cys-2617-Cys-2631, Cys-2633-Cys-2646, Cys-2652-Cys-2663, Cys-2659-Cys-2672, and Cys-2674-Cys-2686. The EGF-like 42; calcium-binding domain occupies 2444 to 2484 (DLNECNQAPKPCNFICKNTEGSYQCSCPKGYILQEDGRSCK). O-linked (Glc) serine glycosylation occurs at Ser-2465. The EGF-like 43; calcium-binding domain maps to 2485-2523 (DLDECATKQHNCQFLCVNTIGGFTCKCPPGFTQHHTSCI). In terms of domain architecture, EGF-like 44; calcium-binding spans 2524-2566 (DNNECTSDINLCGSKGICQNTPGSFTCECQRGFSLDQTGSSCE). An O-linked (Glc) serine glycan is attached at Ser-2547. One can recognise an EGF-like 45; calcium-binding domain in the interval 2567–2606 (DVDECEGNHRCQHGCQNIIGGYRCSCPQGYLQHYQWNQCV). Positions 2607–2647 (DENECLSAHICGGASCHNTLGSYKCMCPAGFQYEQFSGGCQ) constitute an EGF-like 46; calcium-binding domain. An O-linked (Glc) serine glycan is attached at Ser-2628. The EGF-like 47; calcium-binding domain maps to 2648–2687 (DINECGSAQAPCSYGCSNTEGGYLCGCPPGYFRIGQGHCV). Phosphoserine; by FAM20C is present on Ser-2702. The residue at position 2709 (Ser-2709) is a Phosphoserine. The interval 2726-2746 (RGRKRRSTNETDASNIEDQSE) is disordered. The N-linked (GlcNAc...) asparagine glycan is linked to Asn-2734. Positions 2735–2746 (ETDASNIEDQSE) are enriched in polar residues. N-linked (GlcNAc...) asparagine glycosylation is found at Asn-2750 and Asn-2767.

It belongs to the fibrillin family. In terms of assembly, interacts with COL16A1. Interacts with integrin alpha-V/beta-3. Interacts with ADAMTS10; this interaction promotes microfibril assembly. Interacts with THSD4; this interaction promotes fibril formation. Interacts (via N-terminal domain) with FBLN2 and FBLN5. Interacts with ELN. Forms a ternary complex with ELN and FBLN2 or FBLN5 and a significant interaction with ELN seen only in the presence of FBLN2 or FBLN5. Interacts (via N-terminal domain) with LTBP2 (via C-terminal domain) in a Ca(+2)-dependent manner. Interacts (via N-terminal domain) with LTBP1 (via C-terminal domain). Interacts with integrins ITGA5:ITGB1, ITGAV:ITGB3 and ITGAV:ITGB6. Interacts (via N-terminal domain) with BMP2, BMP4, BMP7, BMP10 and GDF5. Interacts (via N-terminal domain) with MFAP2 and MFAP5. Interacts with ADAMTSL5. Interacts with MFAP4. Interacts (via N-terminal domain) with TNFSF11 in a Ca(+2)-dependent manner. Interacts (via N-terminal domain) with EFEMP2; this interaction inhibits EFEMP2 binding to LOX and ELN. Post-translationally, cleavage of N- and C-terminus by furin is required for incorporation into the extracellular matrix and assembly into microfibrils. The C-terminus, which corresponds to the Asprosin chain, was initially thought to constitute a propeptide. Fibrillin-1 and Asprosin chains are still linked together during the secretion from cells, but are subsequently separated by furin, an essential step for incorporation of Fibrillin-1 into the nascent microfibrils. In terms of processing, forms intermolecular disulfide bonds either with other fibrillin-1 molecules or with other components of the microfibrils. O-glycosylated on serine residues by POGLUT2 and POGLUT3 which is necessary for efficient protein secretion.

Its subcellular location is the secreted. The protein localises to the extracellular space. The protein resides in the extracellular matrix. Its function is as follows. Structural component of the 10-12 nm diameter microfibrils of the extracellular matrix, which conveys both structural and regulatory properties to load-bearing connective tissues. Fibrillin-1-containing microfibrils provide long-term force bearing structural support. In tissues such as the lung, blood vessels and skin, microfibrils form the periphery of the elastic fiber, acting as a scaffold for the deposition of elastin. In addition, microfibrils can occur as elastin-independent networks in tissues such as the ciliary zonule, tendon, cornea and glomerulus where they provide tensile strength and have anchoring roles. Fibrillin-1 also plays a key role in tissue homeostasis through specific interactions with growth factors, such as the bone morphogenetic proteins (BMPs), growth and differentiation factors (GDFs) and latent transforming growth factor-beta-binding proteins (LTBPs), cell-surface integrins and other extracellular matrix protein and proteoglycan components. Regulates osteoblast maturation by controlling TGF-beta bioavailability and calibrating TGF-beta and BMP levels, respectively. Negatively regulates osteoclastogenesis by binding and sequestering an osteoclast differentiation and activation factor TNFSF11. This leads to disruption of TNFSF11-induced Ca(2+) signaling and impairment of TNFSF11-mediated nuclear translocation and activation of transcription factor NFATC1 which regulates genes important for osteoclast differentiation and function. Mediates cell adhesion via its binding to cell surface receptors integrins ITGAV:ITGB3 and ITGA5:ITGB1. Binds heparin and this interaction has an important role in the assembly of microfibrils. In terms of biological role, adipokine secreted by white adipose tissue that plays an important regulatory role in the glucose metabolism of liver, muscle and pancreas. Hormone that targets the liver in response to fasting to increase plasma glucose levels. Binds the olfactory receptor OR4M1 at the surface of hepatocytes and promotes hepatocyte glucose release by activating the protein kinase A activity in the liver, resulting in rapid glucose release into the circulation. May act as a regulator of adaptive thermogenesis by inhibiting browning and energy consumption, while increasing lipid deposition in white adipose tissue. Also acts as an orexigenic hormone that increases appetite: crosses the blood brain barrier and exerts effects on the hypothalamus. In the arcuate nucleus of the hypothalamus, asprosin directly activates orexigenic AgRP neurons and indirectly inhibits anorexigenic POMC neurons, resulting in appetite stimulation. Activates orexigenic AgRP neurons via binding to the olfactory receptor OR4M1. May also play a role in sperm motility in testis via interaction with OR4M1 receptor. The polypeptide is Fibrillin-1 (Homo sapiens (Human)).